Here is a 380-residue protein sequence, read N- to C-terminus: Palmitoyltransferase ZDHHC18 (380 aa).

Residues methionine 1 to arginine 59 form a disordered region. Topologically, residues methionine 1–histidine 82 are cytoplasmic. At serine 19 the chain carries Phosphoserine. Over residues proline 27 to glycine 40 the composition is skewed to pro residues. A helical membrane pass occupies residues glycine 83 to phenylalanine 103. At aspartate 104–threonine 111 the chain is on the lumenal side. A helical membrane pass occupies residues leucine 112–leucine 132. Topologically, residues glutamine 133 to arginine 227 are cytoplasmic. Residues lysine 184 to leucine 234 enclose the DHHC domain. Cysteine 214 acts as the S-palmitoyl cysteine intermediate in catalysis. The helical transmembrane segment at phenylalanine 228–valine 248 threads the bilayer. The Lumenal portion of the chain corresponds to threonine 249–alanine 269. A helical transmembrane segment spans residues serine 270–phenylalanine 290. At histidine 291–proline 380 the chain is on the cytoplasmic side. The interval alanine 355 to proline 380 is disordered.

This sequence belongs to the DHHC palmitoyltransferase family. ERF2/ZDHHC9 subfamily. As to expression, ubiquitously expressed.

It localises to the golgi apparatus membrane. The catalysed reaction is L-cysteinyl-[protein] + hexadecanoyl-CoA = S-hexadecanoyl-L-cysteinyl-[protein] + CoA. Palmitoyltransferase that catalyzes the addition of palmitate onto various protein substrates, such as CGAS, HRAS and LCK. Palmitoylates HRAS and LCK. Acts as a negative regulator of the cGAS-STING pathway be mediating palmitoylation and inactivation of CGAS. May also have a palmitoyltransferase activity toward the beta-2 adrenergic receptor/ADRB2 and therefore regulate G protein-coupled receptor signaling. The protein is Palmitoyltransferase ZDHHC18 of Mus musculus (Mouse).